A 412-amino-acid polypeptide reads, in one-letter code: Alanyl-tRNA editing protein Aarsd1 (412 aa).

His-109 and His-113 together coordinate Zn(2+). The residue at position 174 (Ser-174) is a Phosphoserine. Residues Cys-209 and His-213 each contribute to the Zn(2+) site.

This sequence belongs to the class-II aminoacyl-tRNA synthetase family. Alax-L subfamily. Requires Zn(2+) as cofactor.

The protein resides in the cytoplasm. Functions in trans to edit the amino acid moiety from incorrectly charged tRNA(Ala). The chain is Alanyl-tRNA editing protein Aarsd1 (AARSD1) from Homo sapiens (Human).